Reading from the N-terminus, the 156-residue chain is 6,7-dimethyl-8-ribityllumazine synthase (156 aa).

Residues phenylalanine 22, 57-59 (AYE), and 81-83 (TVI) each bind 5-amino-6-(D-ribitylamino)uracil. Residue 86–87 (GT) coordinates (2S)-2-hydroxy-3-oxobutyl phosphate. The active-site Proton donor is the histidine 89. Phenylalanine 114 provides a ligand contact to 5-amino-6-(D-ribitylamino)uracil. Arginine 128 serves as a coordination point for (2S)-2-hydroxy-3-oxobutyl phosphate.

It belongs to the DMRL synthase family. In terms of assembly, forms an icosahedral capsid composed of 60 subunits, arranged as a dodecamer of pentamers.

It carries out the reaction (2S)-2-hydroxy-3-oxobutyl phosphate + 5-amino-6-(D-ribitylamino)uracil = 6,7-dimethyl-8-(1-D-ribityl)lumazine + phosphate + 2 H2O + H(+). Its pathway is cofactor biosynthesis; riboflavin biosynthesis; riboflavin from 2-hydroxy-3-oxobutyl phosphate and 5-amino-6-(D-ribitylamino)uracil: step 1/2. In terms of biological role, catalyzes the formation of 6,7-dimethyl-8-ribityllumazine by condensation of 5-amino-6-(D-ribitylamino)uracil with 3,4-dihydroxy-2-butanone 4-phosphate. This is the penultimate step in the biosynthesis of riboflavin. This Enterobacter sp. (strain 638) protein is 6,7-dimethyl-8-ribityllumazine synthase.